Consider the following 551-residue polypeptide: Ubiquitin domain-containing protein DSK2b (551 aa).

Residues 18-93 enclose the Ubiquitin-like domain; that stretch reads VAVNIRCSNG…IHMVRGSAPS (76 aa). The interval 88–127 is disordered; the sequence is RGSAPSSAPPPAPAASQTTAPSVTRGVGSDNSSNLGGASP. STI1 domains are found at residues 143 to 184 and 197 to 236; these read GNAM…QNLM and NPQM…MREM. The span at 294–319 shows a compositional bias: polar residues; it reads QGVTTQGSDASNNSSTPNAGTGTIPN. The tract at residues 294–336 is disordered; it reads QGVTTQGSDASNNSSTPNAGTGTIPNANPLPNPWGATGGQTTA. STI1 domains lie at 373–410 and 414–449; these read SPLG…MNQL and NPQL…MQQM. The disordered stretch occupies residues 455 to 475; it reads SLSQNRNTASQDAGQTGAATG. Low complexity predominate over residues 465-475; sequence QDAGQTGAATG. A UBA domain is found at 504-548; the sequence is PPEERYATQLQQLQEMGFYDRAENIRALLATNGNVNAAVERLLGS.

In terms of assembly, interacts with 'Lys-48'-linked polyubiquitin chains via its UBA domain. Interacts with RPN10 via its ubiquitin-like domain. Interacts with PEX2 and PEX12. As to expression, ubiquitous.

Its subcellular location is the nucleus. It is found in the cytoplasm. Binds and presumably selects ubiquitin-conjugates for destruction. Prefers multiubiquitin chains rather than single ubiquitins, with a binding affinity for 'Lys-48'-linked ubiquitin chains. Acts as a ubiquitin receptor that associates with the 26S proteasomal docking subunit RPN10 for the indirect recognition of ubiquitinated substrates of ubiquitin/26S proteasome-mediated proteolysis (UPP). This is Ubiquitin domain-containing protein DSK2b (DSK2B) from Arabidopsis thaliana (Mouse-ear cress).